A 248-amino-acid chain; its full sequence is tRNA (guanine-N(1)-)-methyltransferase (248 aa).

S-adenosyl-L-methionine is bound by residues Gly113 and 133 to 138; that span reads IGDYVL.

It belongs to the RNA methyltransferase TrmD family. As to quaternary structure, homodimer.

It is found in the cytoplasm. It catalyses the reaction guanosine(37) in tRNA + S-adenosyl-L-methionine = N(1)-methylguanosine(37) in tRNA + S-adenosyl-L-homocysteine + H(+). In terms of biological role, specifically methylates guanosine-37 in various tRNAs. The chain is tRNA (guanine-N(1)-)-methyltransferase from Shewanella frigidimarina (strain NCIMB 400).